The following is a 364-amino-acid chain: MQERHTEQDYRALLIADTPIIDVRAPIEFEQGAMPAAINLPLMNNDERAAVGTCYKQQGSDAALALGHKLVAGEIRQQRMDAWRAACLQNPQGILCCARGGQRSHIVQSWLHAAGIDYPLVEGGYKALRQTTIQATIELAQKPIVLIGGCTGCGKTLLVQQQPNGVDLEGLARHRGSAFGRTLQPQLSQASFENLLAAEMLKTDARQNLRLWVLEDESRMIGSNHLPECLRERMTQAAIAVVEDPFEIRLERLNEEYFLRMHHDFTHAYGDEQGWQEYCEYLHHGLSAIKRRLGLQRYNELAARLDAALTTQLATGSTDGHLAWLVPLLKEYYDPMYRYQLEKKAEKVVFRGEWAEVAEWVKAR.

In terms of domain architecture, Rhodanese spans 14 to 137; it reads LIADTPIIDV…LRQTTIQATI (124 aa). C97 acts as the S-selanylcysteine intermediate in catalysis.

The protein belongs to the SelU family. Monomer.

It carries out the reaction 5-methylaminomethyl-2-thiouridine(34) in tRNA + selenophosphate + (2E)-geranyl diphosphate + H2O + H(+) = 5-methylaminomethyl-2-selenouridine(34) in tRNA + (2E)-thiogeraniol + phosphate + diphosphate. It catalyses the reaction 5-methylaminomethyl-2-thiouridine(34) in tRNA + (2E)-geranyl diphosphate = 5-methylaminomethyl-S-(2E)-geranyl-thiouridine(34) in tRNA + diphosphate. The catalysed reaction is 5-methylaminomethyl-S-(2E)-geranyl-thiouridine(34) in tRNA + selenophosphate + H(+) = 5-methylaminomethyl-2-(Se-phospho)selenouridine(34) in tRNA + (2E)-thiogeraniol. The enzyme catalyses 5-methylaminomethyl-2-(Se-phospho)selenouridine(34) in tRNA + H2O = 5-methylaminomethyl-2-selenouridine(34) in tRNA + phosphate. Involved in the post-transcriptional modification of the uridine at the wobble position (U34) of tRNA(Lys), tRNA(Glu) and tRNA(Gln). Catalyzes the conversion of 2-thiouridine (S2U-RNA) to 2-selenouridine (Se2U-RNA). Acts in a two-step process involving geranylation of 2-thiouridine (S2U) to S-geranyl-2-thiouridine (geS2U) and subsequent selenation of the latter derivative to 2-selenouridine (Se2U) in the tRNA chain. The sequence is that of tRNA 2-selenouridine synthase from Escherichia coli O8 (strain IAI1).